A 137-amino-acid chain; its full sequence is Immunoglobulin domain-containing protein oig-1 (137 aa).

The signal sequence occupies residues 1–23 (MFSELRILRDILLLCFLSVGINA). In terms of domain architecture, Ig-like C2-type spans 41–133 (PKISRSSYFK…KGSRVKKFLT (93 aa)). C63 and C118 are joined by a disulfide.

As to expression, expressed in DD and VD GABAergic motor neurons. Expressed in a subset of head neurons including M2 motor neurons in the pharynx. Expressed in coelomocytes.

The protein localises to the membrane. It is found in the secreted. Its subcellular location is the extracellular space. It localises to the cell projection. The protein resides in the dendrite. The protein localises to the axon. In terms of biological role, plays a role in neural development, where it temporally regulates synapse formation in the D-type inhibitory GABAergic motor neurons, dorsal D (DD) and ventral D (VD) motor neurons. Controls the translocation of postsynaptic proteins, such as the acetylcholine receptor subunit acr-12, and presynaptic proteins, such as snb-1, along nerve cords to prevent premature synapse remodeling/formation. This Caenorhabditis elegans protein is Immunoglobulin domain-containing protein oig-1.